Reading from the N-terminus, the 551-residue chain is Protein ROOT HAIR SPECIFIC 17 (551 aa).

Residues 39–59 (LFPLVSAVSGCLLLILFSFST) form a helical; Signal-anchor for type II membrane protein membrane-spanning segment. N-linked (GlcNAc...) asparagine glycans are attached at residues Asn109 and Asn153. 293–295 (HLR) contacts substrate. N-linked (GlcNAc...) asparagine glycosylation is found at Asn405 and Asn465. The disordered stretch occupies residues 515-539 (KAKHVNEDDSSEYSEIGNVPISSRS).

It belongs to the glycosyltransferase GT106 family. In terms of tissue distribution, specifically expressed in the root hair.

It localises to the membrane. It functions in the pathway glycan metabolism. The sequence is that of Protein ROOT HAIR SPECIFIC 17 from Arabidopsis thaliana (Mouse-ear cress).